The sequence spans 223 residues: Ubiquitin carboxyl-terminal hydrolase isozyme L1 (223 aa).

N-acetylmethionine is present on Met-1. One can recognise a UCH catalytic domain in the interval 2 to 221 (QLKPMEINPE…VRFSAVALCK (220 aa)). The segment at 5 to 10 (PMEINP) is interaction with ubiquitin. The active-site Nucleophile is Cys-90. Ser-125 carries the phosphoserine modification. The active-site Proton donor is the His-161. The interval 211-216 (EVRFSA) is interaction with ubiquitin. A lipid anchor (S-farnesyl cysteine) is attached at Cys-220. The propeptide at 221–223 (KCA) is removed in mature form.

The protein belongs to the peptidase C12 family. Monomer. Homodimer. Interacts with COPS5 and SNCA. O-glycosylated.

Its subcellular location is the cytoplasm. The protein localises to the endoplasmic reticulum membrane. It catalyses the reaction Thiol-dependent hydrolysis of ester, thioester, amide, peptide and isopeptide bonds formed by the C-terminal Gly of ubiquitin (a 76-residue protein attached to proteins as an intracellular targeting signal).. Its function is as follows. Ubiquitin-protein hydrolase involved both in the processing of ubiquitin precursors and of ubiquitinated proteins. This enzyme is a thiol protease that recognizes and hydrolyzes a peptide bond at the C-terminal glycine of ubiquitin. Also binds to free monoubiquitin and may prevent its degradation in lysosomes. The homodimer may have ATP-independent ubiquitin ligase activity. The protein is Ubiquitin carboxyl-terminal hydrolase isozyme L1 (UCHL1) of Monodelphis domestica (Gray short-tailed opossum).